The primary structure comprises 540 residues: Protein SOSEKI 3 (540 aa).

A DIX-like oligomerization domain region spans residues 32-123 (KKVQIVYYLS…YVLKGSELFD (92 aa)). Disordered regions lie at residues 147 to 201 (EPPS…DAKN) and 219 to 294 (ADAS…SSLG). Low complexity-rich tracts occupy residues 150 to 163 (SSRS…SSSM) and 185 to 194 (RSVSSSGVSP). Polar residues predominate over residues 221–244 (ASTQTDETVSGRSKTPIETFSRGV). A compositionally biased stretch (acidic residues) spans 246 to 256 (TDEDVSSEPET). The span at 280–292 (NSVSPPFSNSASS) shows a compositional bias: low complexity. Positions 342–343 (CG) match the Association to cell membranes motif. The segment at 412–492 (KKDAADSNAS…KNIPCTTKTH (81 aa)) is disordered. The span at 418–437 (SNASLKRSSSYNGDRASNQM) shows a compositional bias: polar residues. Basic and acidic residues predominate over residues 471–482 (SEKRRDSSEDTT).

This sequence belongs to the SOSEKI family. In terms of assembly, homodimer. Forms long polymer filaments with other SOKs proteins polymers (e.g. SOK1, SOK2, SOK3 and SOK4) crucial for polar localization and biological activity. Binds to ANGUSTIFOLIA (AN). In terms of tissue distribution, expressed during embryogenesis and in roots.

Its subcellular location is the cell membrane. In terms of biological role, SOSEKI proteins (SOK1-5) locally interpret global polarity cues and can influence cell division orientation to coordinate cell polarization relative to body axes, probably by guiding ANGUSTIFOLIA (AN) polarized localization. The sequence is that of Protein SOSEKI 3 from Arabidopsis thaliana (Mouse-ear cress).